The primary structure comprises 164 residues: MNIVDQQTFRDAMSCMGAAVNIITTDGPAGRAGFTASAVCSVTDTPPTLLVCLNRGASVWPVFNENRTLCVNTLSAGQEPLSNLFGGKTPMEHRFAAARWQTGVTGCPQLEEALVSFDCRISQVVSVGTHDILFCAIEAIHRHATPYGLVWFDRSYHALMRPAC.

This sequence belongs to the non-flavoprotein flavin reductase family. RutF subfamily.

The catalysed reaction is FMNH2 + NAD(+) = FMN + NADH + 2 H(+). Functionally, catalyzes the reduction of FMN to FMNH2 which is used to reduce pyrimidine by RutA via the Rut pathway. This chain is FMN reductase (NADH) RutF, found in Escherichia coli O81 (strain ED1a).